Reading from the N-terminus, the 212-residue chain is Large ribosomal subunit protein uL3 (212 aa).

Residues 139-153 (LSHRVTGSIGQNQTP) are compositionally biased toward polar residues. Positions 139-161 (LSHRVTGSIGQNQTPGKVFKGKK) are disordered. Glutamine 151 bears the N5-methylglutamine mark.

The protein belongs to the universal ribosomal protein uL3 family. Part of the 50S ribosomal subunit. Forms a cluster with proteins L14 and L19. Methylated by PrmB.

In terms of biological role, one of the primary rRNA binding proteins, it binds directly near the 3'-end of the 23S rRNA, where it nucleates assembly of the 50S subunit. The sequence is that of Large ribosomal subunit protein uL3 from Baumannia cicadellinicola subsp. Homalodisca coagulata.